Consider the following 229-residue polypeptide: Endonuclease V (229 aa).

Mg(2+) contacts are provided by Asp46 and Asp114.

Belongs to the endonuclease V family. Requires Mg(2+) as cofactor.

The protein localises to the cytoplasm. The enzyme catalyses Endonucleolytic cleavage at apurinic or apyrimidinic sites to products with a 5'-phosphate.. In terms of biological role, DNA repair enzyme involved in the repair of deaminated bases. Selectively cleaves double-stranded DNA at the second phosphodiester bond 3' to a deoxyinosine leaving behind the intact lesion on the nicked DNA. The sequence is that of Endonuclease V from Streptomyces avermitilis (strain ATCC 31267 / DSM 46492 / JCM 5070 / NBRC 14893 / NCIMB 12804 / NRRL 8165 / MA-4680).